Reading from the N-terminus, the 281-residue chain is Glycerol uptake facilitator protein (281 aa).

At 1–5 (MSQTS) the chain is on the cytoplasmic side. A helical membrane pass occupies residues 6 to 34 (TLKGQCIAEFLGTGLLIFFGVGCVAALKV). The Periplasmic portion of the chain corresponds to 35 to 39 (AGASF). The helical transmembrane segment at 40–60 (GQWEISVIWGLGVAMAIYLTA) threads the bilayer. Residues 61–63 (GVS) lie on the Cytoplasmic side of the membrane. An intramembrane segment occupies 64–67 (GAHL). An NPA 1 motif is present at residues 68 to 70 (NPA). Residues 68–78 (NPAVTIALWLF) constitute an intramembrane region (helical). At 79-84 (ACFDKR) the chain is on the cytoplasmic side. The helical transmembrane segment at 85–108 (KVIPFIVSQVAGAFCAAALVYGLY) threads the bilayer. Topologically, residues 109–143 (YNLFFDFEQTHHIVRGSVESVDLAGTFSTYPNPHI) are periplasmic. The helical transmembrane segment at 144–169 (NFVQAFAVEMVITAILMGLILALTDD) threads the bilayer. Residues 170–177 (GNGVPRGP) lie on the Cytoplasmic side of the membrane. Residues 178–194 (LAPLLIGLLIAVIGASM) form a helical membrane-spanning segment. The Periplasmic portion of the chain corresponds to 195 to 198 (GPLT). Residues 199 to 202 (GFAM) lie within the membrane without spanning it. The short motif at 203–205 (NPA) is the NPA 2 element. An intramembrane region (helical) is located at residues 203-216 (NPARDFGPKVFAWL). Over 217–231 (AGWGNVAFTGGRDIP) the chain is Periplasmic. Residues 232-254 (YFLVPLFSPIVGAIVGAFAYRKL) traverse the membrane as a helical segment. Topologically, residues 255-281 (IGRHLPCDICVVEEKETTTPSEQKASL) are cytoplasmic.

Belongs to the MIP/aquaporin (TC 1.A.8) family. Homotetramer.

The protein localises to the cell inner membrane. The catalysed reaction is glycerol(in) = glycerol(out). Mediates glycerol diffusion across the cytoplasmic membrane via a pore-type mechanism. In Shigella flexneri, this protein is Glycerol uptake facilitator protein (glpF).